A 370-amino-acid chain; its full sequence is Histidinol-phosphate aminotransferase 1 (370 aa).

N6-(pyridoxal phosphate)lysine is present on lysine 222.

The protein belongs to the class-II pyridoxal-phosphate-dependent aminotransferase family. Histidinol-phosphate aminotransferase subfamily. In terms of assembly, homodimer. Pyridoxal 5'-phosphate serves as cofactor.

It carries out the reaction L-histidinol phosphate + 2-oxoglutarate = 3-(imidazol-4-yl)-2-oxopropyl phosphate + L-glutamate. It participates in amino-acid biosynthesis; L-histidine biosynthesis; L-histidine from 5-phospho-alpha-D-ribose 1-diphosphate: step 7/9. This is Histidinol-phosphate aminotransferase 1 (hisC1) from Bacillus cereus (strain ATCC 14579 / DSM 31 / CCUG 7414 / JCM 2152 / NBRC 15305 / NCIMB 9373 / NCTC 2599 / NRRL B-3711).